We begin with the raw amino-acid sequence, 373 residues long: Putative ribosome biogenesis protein C8F11.04 (373 aa).

Positions 265 to 373 are disordered; that stretch reads RKVVTKETAS…VKAGKNKVKH (109 aa). Residues 292 to 320 are compositionally biased toward basic and acidic residues; it reads KVEVAKESKDSKQQNVSDKKQVTVKEVPK. Over residues 347 to 359 the composition is skewed to polar residues; the sequence is KVSQSSLKANGTT. The segment covering 362-373 has biased composition (basic residues); that stretch reads KKVKAGKNKVKH.

Belongs to the universal ribosomal protein uL1 family. Highly divergent. In terms of assembly, component of the 90S pre-ribosomes.

It localises to the nucleus. It is found in the nucleolus. Functionally, involved in rRNA-processing and ribosome biosynthesis. The sequence is that of Putative ribosome biogenesis protein C8F11.04 from Schizosaccharomyces pombe (strain 972 / ATCC 24843) (Fission yeast).